We begin with the raw amino-acid sequence, 173 residues long: ATP synthase subunit b (173 aa).

The chain crosses the membrane as a helical span at residues leucine 25–glycine 45.

Belongs to the ATPase B chain family. In terms of assembly, F-type ATPases have 2 components, F(1) - the catalytic core - and F(0) - the membrane proton channel. F(1) has five subunits: alpha(3), beta(3), gamma(1), delta(1), epsilon(1). F(0) has four main subunits: a(1), b(1), b'(1) and c(10-14). The alpha and beta chains form an alternating ring which encloses part of the gamma chain. F(1) is attached to F(0) by a central stalk formed by the gamma and epsilon chains, while a peripheral stalk is formed by the delta, b and b' chains.

It localises to the cellular thylakoid membrane. In terms of biological role, f(1)F(0) ATP synthase produces ATP from ADP in the presence of a proton or sodium gradient. F-type ATPases consist of two structural domains, F(1) containing the extramembraneous catalytic core and F(0) containing the membrane proton channel, linked together by a central stalk and a peripheral stalk. During catalysis, ATP synthesis in the catalytic domain of F(1) is coupled via a rotary mechanism of the central stalk subunits to proton translocation. Functionally, component of the F(0) channel, it forms part of the peripheral stalk, linking F(1) to F(0). The chain is ATP synthase subunit b from Synechococcus sp. (strain CC9311).